We begin with the raw amino-acid sequence, 809 residues long: Transitional endoplasmic reticulum ATPase homolog 1 (809 aa).

The interval 1-21 is disordered; it reads MASVPTHQSEKEKKNDELSTA. Over residues 8-21 the composition is skewed to basic and acidic residues; it reads QSEKEKKNDELSTA. Residues 253–259, asparagine 354, histidine 390, and 527–532 contribute to the ATP site; these read PGTGKTL and GCGKTL. The segment at 779–809 is disordered; sequence FGNNFKFPGEQRGSDAPSAPVPAQDDDDLYN. The interaction with ufd-2 stretch occupies residues 803-809; the sequence is DDDDLYN.

It belongs to the AAA ATPase family. CDC48 subfamily. In terms of assembly, homohexamer; oligomerization is ATP-independent. Forms a ring-shaped particle of 18.3 nm diameter, that displays 6-fold radial symmetry. Interacts with cdc-48.2 and thus may form heterohexamers. Forms a complex composed of cdc-48.1, him-6 and crp-1; within the complex, interacts with helicase him-6 and GTPase crp-1. Forms a complex composed of deubiquitinating enzyme atx-3, adapter ubxn-5 and cdc-48.1; within the complex, interacts (via N-terminus) with ubxn-5 and with atx-3. Forms a complex composed of deubiquitinating enzyme atx-3, E4 ubiquitin-protein ligase ufd-2 and cdc-48.1; within the complex, interacts with atx-3 and (via DDDLYN motif) with ufd-2. Interacts (via N-terminus) with atx-3 (via RRDR motif); the interaction is not required for atx-3 enzymatic activity. Forms a complex composed of cdc-48.1, myosin chaperone unc-45, ubiquitin-protein ligases ufd-2 and chn-1; within the complex, interacts (via DDDLYN motif) with ufd-2 and targets myosin chaperone unc-45 for proteasomal degradation. Forms a complex composed of ubxn-3, ufd-1, npl-4.1 and cdc-48.1; within the complex, interacts (via N-terminus) with ubxn-3 (via FPK motif) and with ufd-1. Forms a complex composed of ubxn-3, cdc-48.1 and/or cdc-48.2 and substrate cdt-1. Interacts (via N-terminus) with ubxn-1. Interacts (via N-terminus) with ubxn-2. Interacts (via N-terminus) with ubxn-4. Interacts with ubxn-6. Interacts with ufd-3. Does not interact with air-2. In terms of tissue distribution, expressed in germ cells and spermatheca. Expressed in body wall muscles.

It is found in the cytoplasm. It localises to the perinuclear region. It catalyses the reaction ATP + H2O = ADP + phosphate + H(+). Its activity is regulated as follows. The first ATP-binding region has low ATPase activity. The second ATP-binding region is responsible for ATPase activity. ATP binding to the first ATP-binding region induces intrinsic activity of the second ATP-binding region. While ATP binding to the first ATP-binding region appears to prevent ATP hydrolysis by the second ATP-binding region, ADP-binding to first region promotes the coordinate and cooperative ATPase cycle of the second ATP-binding region. ATP binding to the first ATP-binding region induces a conformational change, promoting the rotation of the first ATP-binding region relative to the second ATP-binding region in the hexamer. Inhibited by N-ethylmaleimide (NEM). Its function is as follows. ATP-dependent chaperone which probably uses the energy provided by ATP hydrolysis to generate mechanical force to unfold substrate proteins, disassemble protein complexes, and disaggregate protein aggregates. Can also prevent aggregation of unfolded proteins also in an ATP-independent manner. Targets polyubiquitinated proteins for proteasomal degradation by binding to 'Lys-48'-linked polyubiquitin chains. Involved in the cytoplasmic elimination of misfolded proteins exported from the ER. This pathway, known as ERAD, prevents the activation of the unfolded protein response (UPR) caused by the accumulation of misfolded proteins in the ER. In association with helicase him-6 and GTPase crp-1, regulates the unfolded protein response (UPR) following ER stress, probably independently of the ERAD pathway. Together with udf-2 and chn-1, regulates myosin assembly in body wall muscles by targeting myosin chaperone unc-45 for proteasomal degradation. Together with the ufd-1-npl-4 complex, controls the switch from spermatogenesis to oogenesis by regulating E3 ligase cul-2 complex-mediated tra-1 proteasomal degradation. During oocyte meiosis and together with cdc-48.2, required for chromosome condensation at the diakinesis phase in prophase I and for progression of metaphase I. During the first embryonic cell division, regulates DNA replication and thus chromosome segregation and decondensation, and nuclear envelope re-assembly. In S phase and in association with ufd-1, npl-4.1 and/or npl-4.2 and ubxn-3, ensures the degradation of DNA licensing factor cdt-1 after the initiation of DNA replication and thus the disassembly of the DNA replication CMG helicase complex by promoting the dissociation from chromatin of several of its components including cdc-45 and sld-5. Regulates ubxn-3 nuclear localization during S phase. During the first embryonic cell divisions and together with cdc-48.2, regulates the re-assembly of the nuclear envelope after mitosis possibly by inactivating kinase air-2, a component of the chromosomal passenger complex (CPC). However, in another study, cdc-48.1 does not appear to be implicated in the regulation of air-2. The chain is Transitional endoplasmic reticulum ATPase homolog 1 from Caenorhabditis elegans.